The following is a 1090-amino-acid chain: Solute carrier family 38 member 10 (1090 aa).

10 helical membrane passes run 9 to 31, 36 to 58, 84 to 104, 123 to 143, 153 to 173, 229 to 249, 272 to 292, 323 to 343, 345 to 365, and 378 to 398; these read WGLI…PFCF, IVLG…MFLV, LVET…YVVI, TVRV…LSLQ, FSAM…LSSL, IFAS…FFGY, MIRV…ILPC, VLTL…PNVE, ILGF…PALI, and VVLW…LSVT. The residue at position 441 (S441) is a Phosphoserine. 6 stretches are compositionally biased toward basic and acidic residues: residues 441–454, 493–508, 517–528, 544–560, 587–596, and 607–623; these read SQEK…KEVL, EAHR…KVVV, PEEKKPPPRLPD, ESEK…EGKR, PRKEDSRPGN, and DSVE…REPA. 3 disordered regions span residues 441–675, 729–831, and 857–1037; these read SQEK…AGSK, EIRQ…IDLR, and KAAP…ELAP. Phosphoserine occurs at positions 608 and 636. 3 stretches are compositionally biased toward basic and acidic residues: residues 654 to 665, 729 to 744, and 758 to 767; these read EAAEQREKKEAE, EIRQ…KPKP, and GQEEEAEHAG. The residue at position 769 (T769) is a Phosphothreonine. S887 carries the phosphoserine modification. Positions 923 to 936 are enriched in polar residues; sequence RQSGPTKAPVQTQA. Basic and acidic residues-rich tracts occupy residues 954-973, 1004-1013, and 1026-1037; these read PEVR…EQHK, ENAKPNRDLK, and DLASHPEQELAP.

The protein belongs to the amino acid/polyamine transporter 2 family. As to expression, expressed in neurons, astrocytes and epithelial cells scattered throughout the central nervous system structures including striatum, ependyma, cerebral cortex, hippocampus, hypothalamus, thalamus, pons, and cerebellum (at protein level). Highly expressed in paraventricular hypothalamic nucleus, suprachiasmatic nucleus, anterior hypothalamic area central part, in lateral ventricule and in dorsal 3rd ventricule (at protein level). Expressed in choroid plexus epithelial cells (at protein level).

It is found in the membrane. The enzyme catalyses L-glutamate(out) = L-glutamate(in). It carries out the reaction L-glutamine(out) = L-glutamine(in). It catalyses the reaction L-alanine(in) = L-alanine(out). The catalysed reaction is L-serine(in) = L-serine(out). The enzyme catalyses L-leucine(in) = L-leucine(out). Its function is as follows. Facilitates bidirectional transport of amino acids. May act as a glutamate sensor that regulates glutamate-glutamine cycle and mTOR signaling in the brain. The transport mechanism remains to be elucidated. The protein is Solute carrier family 38 member 10 of Mus musculus (Mouse).